The primary structure comprises 83 residues: Small ribosomal subunit protein uS17 (83 aa).

This sequence belongs to the universal ribosomal protein uS17 family. Part of the 30S ribosomal subunit.

Functionally, one of the primary rRNA binding proteins, it binds specifically to the 5'-end of 16S ribosomal RNA. This is Small ribosomal subunit protein uS17 from Acaryochloris marina (strain MBIC 11017).